We begin with the raw amino-acid sequence, 191 residues long: Putative NADH dehydrogenase/NAD(P)H nitroreductase (191 aa).

127-132 serves as a coordination point for NAD(+); sequence AAHSLG.

It belongs to the nitroreductase family. The cofactor is FMN.

This Methanothermobacter thermautotrophicus (strain ATCC 29096 / DSM 1053 / JCM 10044 / NBRC 100330 / Delta H) (Methanobacterium thermoautotrophicum) protein is Putative NADH dehydrogenase/NAD(P)H nitroreductase.